The chain runs to 560 residues: Formate--tetrahydrofolate ligase (560 aa).

69–76 (TPAGEGKS) serves as a coordination point for ATP.

Belongs to the formate--tetrahydrofolate ligase family.

It catalyses the reaction (6S)-5,6,7,8-tetrahydrofolate + formate + ATP = (6R)-10-formyltetrahydrofolate + ADP + phosphate. Its pathway is one-carbon metabolism; tetrahydrofolate interconversion. This Listeria monocytogenes serotype 4a (strain HCC23) protein is Formate--tetrahydrofolate ligase.